Consider the following 598-residue polypeptide: Nuclear receptor subfamily 4 group A member 1 (598 aa).

Disordered stretches follow at residues 1 to 50 and 120 to 159; these read MPCI…PTAL and LDET…GSFG. 2 stretches are compositionally biased toward low complexity: residues 37-50 and 134-145; these read LASP…PTAL and SPCSAPSPSTPS. The required for nuclear import stretch occupies residues 171-466; it reads RAWTEQLPKA…PAEGKLIFCS (296 aa). Residues 264–339 constitute a DNA-binding region (nuclear receptor); that stretch reads EGRCAVCGDN…VGMVKEVVRT (76 aa). 2 consecutive NR C4-type zinc fingers follow at residues 267 to 287 and 303 to 327; these read CAVC…CEGC and CLAN…FQKC. Residues 268–354 are required for binding NBRE-containing DNA; that stretch reads AVCGDNASCQ…RRGRLPSKPK (87 aa). The required for the interaction with RXRA stretch occupies residues 299–361; it reads AKYICLANKD…KPKQPPDASP (63 aa). Ser-341 is subject to Phosphoserine; by PKA. The tract at residues 341-361 is disordered; the sequence is SLKGRRGRLPSKPKQPPDASP. Ser-351 carries the post-translational modification Phosphoserine; by PKA, RPS6KA1 and RPS6KA3. The NR LBD domain occupies 360–595; sequence SPANLLTSLV…PIVDKIFMDT (236 aa). The interval 521-544 is binds lipopolysaccharide; the sequence is PRRVEELQNRIASCLKEHVSAVAG. Residues 584–595 are AF-2; that stretch reads PPPIVDKIFMDT.

It belongs to the nuclear hormone receptor family. NR4 subfamily. As to quaternary structure, binds the NGFI-B response element (NBRE) as a monomer. Binds the Nur response element (NurRE), consisting of two inverse NBRE-related octanucleotide repeats separated by 6 base-pairs, as a dimer. Interacts (via N-terminus) with NLRP3 (via LRR repeat domain); the interaction is direct, requires binding of NR4A1/Nur77 to NBRE-containing dsDNA and lipopolysaccharide, and leads to non-canonical NLRP3 inflammasome activation. Interacts with GADD45GIP1. Interacts with STK11. Heterodimer (via DNA-binding domain) with RXRA (via C-terminus); DNA-binding of the heterodimer is enhanced by 9-cis retinoic acid. Competes for the RXRA interaction with EP300 and thereby attenuates EP300 mediated acetylation of RXRA. Interacts with NCOA1. Interacts with NCOA2. Interacts with NCOA3. It depends on Zn(2+) as a cofactor. Phosphorylated at Ser-351 by RPS6KA1 and RPS6KA3 in response to mitogenic or stress stimuli. In terms of processing, acetylated by p300/CBP, acetylation increases stability. Deacetylated by HDAC1.

Its subcellular location is the cytoplasm. The protein localises to the cytosol. The protein resides in the nucleus. It localises to the mitochondrion. Orphan nuclear receptor. Binds the NGFI-B response element (NBRE) 5'-AAAGGTCA-3'. Binds 9-cis-retinoic acid outside of its ligand-binding (NR LBD) domain. Participates in energy homeostasis by sequestrating the kinase STK11 in the nucleus, thereby attenuating cytoplasmic AMPK activation. Regulates the inflammatory response in macrophages by regulating metabolic adaptations during inflammation, including repressing the transcription of genes involved in the citric acid cycle (TCA). Inhibits NF-kappa-B signaling by binding to low-affinity NF-kappa-B binding sites, such as at the IL2 promoter. May act concomitantly with NR4A2 in regulating the expression of delayed-early genes during liver regeneration. Plays a role in the vascular response to injury. In terms of biological role, in the cytosol, upon its detection of both bacterial lipopolysaccharide (LPS) and NBRE-containing mitochondrial DNA released by GSDMD pores during pyroptosis, it promotes non-canonical NLRP3 inflammasome activation by stimulating association of NLRP3 and NEK7. This chain is Nuclear receptor subfamily 4 group A member 1 (NR4A1), found in Canis lupus familiaris (Dog).